Reading from the N-terminus, the 138-residue chain is Large ribosomal subunit protein bL17 (138 aa).

It belongs to the bacterial ribosomal protein bL17 family. As to quaternary structure, part of the 50S ribosomal subunit. Contacts protein L32.

This is Large ribosomal subunit protein bL17 from Nitrobacter winogradskyi (strain ATCC 25391 / DSM 10237 / CIP 104748 / NCIMB 11846 / Nb-255).